A 602-amino-acid chain; its full sequence is Rho family-interacting cell polarization regulator 2 (602 aa).

Residues 46–73 (KKPQAKVKKMHNLGHKNSTTPKEPQPKR) form a disordered region. Basic residues predominate over residues 48 to 59 (PQAKVKKMHNLG). The stretch at 83–112 (NGLDEYLEVHQTELDKLTAQLKDMRRNSRL) forms a coiled coil. The tract at residues 173–421 (RESLTEINRS…TTAATQHRAL (249 aa)) is necessary for interaction with NCAM and myoblast protrusion formation. Residues 384 to 474 (GDLPYEDRVP…RSEVCQKPSN (91 aa)) form a disordered region. The segment covering 403 to 416 (AHVSSSPDITTAAT) has biased composition (polar residues). Over residues 423–437 (SSESSSPDCSSSDSC) the composition is skewed to low complexity.

The protein belongs to the RIPOR family. Homooligomer; homooligomerization is regulated by RHOC and leads to the formation of concatemers through the association of N- and C-termini. Interacts with NCAM.

The protein localises to the cytoplasm. The protein resides in the cytoskeleton. It is found in the cell projection. Its subcellular location is the filopodium. It localises to the apical cell membrane. The protein localises to the stereocilium. The protein resides in the stereocilium membrane. In terms of biological role, acts as an inhibitor of the small GTPase RHOA and plays several roles in the regulation of myoblast and hair cell differentiation, lymphocyte T proliferation and neutrophil polarization. Plays a role in fetal mononuclear myoblast differentiation by promoting filopodia and myotube formation. Maintains naive T lymphocytes in a quiescent state and prevents chemokine-induced T lymphocyte responses, such as cell adhesion, polarization and migration. Involved also in the regulation of neutrophil polarization, chemotaxis and adhesion. Required for normal development of inner and outer hair cell stereocilia within the cochlea of the inner ear. Plays a role for maintaining the structural organization of the basal domain of stereocilia. Involved in mechanosensory hair cell function. Required for normal hearing. The protein is Rho family-interacting cell polarization regulator 2 of Gallus gallus (Chicken).